The sequence spans 192 residues: Thymidylate kinase (192 aa).

Residue 7-14 (GIDCVGKS) coordinates ATP.

Belongs to the thymidylate kinase family.

The catalysed reaction is dTMP + ATP = dTDP + ADP. In terms of biological role, phosphorylation of dTMP to form dTDP in both de novo and salvage pathways of dTTP synthesis. The protein is Thymidylate kinase of Campylobacter jejuni subsp. jejuni serotype O:6 (strain 81116 / NCTC 11828).